The chain runs to 350 residues: Methionine aminopeptidase 1D, chloroplastic/mitochondrial (350 aa).

The N-terminal 49 residues, 1–49, are a transit peptide targeting the chloroplast and mitochondrion; the sequence is MAGVKSLQPRLISSFLGNNSIRSTQPLIHLFRFDLGRRHVSMQLSRTFS. Gly50 carries the post-translational modification N-acetylglycine. A disordered region spans residues 71–90; that stretch reads RLRPGNVSPRRPVPGHITKP. Position 180 (His180) interacts with substrate. Residues Asp197, Asp208, and His271 each coordinate a divalent metal cation. His278 is a binding site for substrate. Residues Glu303 and Glu334 each contribute to the a divalent metal cation site.

It belongs to the peptidase M24A family. Methionine aminopeptidase type 1 subfamily. It depends on Co(2+) as a cofactor. The cofactor is Zn(2+). Mn(2+) serves as cofactor. Fe(2+) is required as a cofactor. In terms of tissue distribution, ubiquitous. Preferentially expressed in green tissues.

It is found in the plastid. It localises to the chloroplast. The protein localises to the mitochondrion. The enzyme catalyses Release of N-terminal amino acids, preferentially methionine, from peptides and arylamides.. Functionally, removes the N-terminal methionine from nascent proteins. The N-terminal methionine is often cleaved when the second residue in the primary sequence is small and uncharged (Met-Ala-, Cys, Gly, Pro, Ser, Thr, or Val). The chain is Methionine aminopeptidase 1D, chloroplastic/mitochondrial (MAP1D) from Arabidopsis thaliana (Mouse-ear cress).